The chain runs to 1413 residues: ABC transporter G family member 33 (1413 aa).

A compositionally biased stretch (low complexity) spans 1 to 10; it reads MGSSFRSSSS. Positions 1–21 are disordered; the sequence is MGSSFRSSSSRNEHEDGGDEA. Positions 11 to 21 are enriched in basic and acidic residues; that stretch reads RNEHEDGGDEA. One can recognise an ABC transporter 1 domain in the interval 140-412; it reads LKLSGVRTNE…FEECGFQCPE (273 aa). 172–179 provides a ligand contact to ATP; it reads GPPGCGKT. An ABC transmembrane type-2 1 domain is found at 490-702; that stretch reads ELFRACISRE…AEIGLSVNEF (213 aa). Transmembrane regions (helical) follow at residues 509 to 529, 546 to 566, 580 to 600, 626 to 646, 652 to 672, and 738 to 758; these read VYLFKTFQLVLAAIITMTVFI, CLFFATVVLLVDGIPELSMTV, FYPAWAYAIPATVLKIPLSFF, FMILFAVHFTSISMFRCIAAI, AAMTAGSFVMLITFVFAGFAI, and LSALLGLTIIFNTIFTLALSF. The 253-residue stretch at 813-1065 folds into the ABC transporter 2 domain; it reads ITFQDLNYYV…CVIEYFQNIP (253 aa). 858-865 lines the ATP pocket; it reads GISGAGKT. The ABC transmembrane type-2 2 domain occupies 1138 to 1352; it reads EQFKSCLWKM…TLNLFFSSQY (215 aa). 7 consecutive transmembrane segments (helical) span residues 1157–1177, 1189–1209, 1245–1265, 1276–1296, 1302–1322, 1330–1350, and 1385–1405; these read YNLMRIGHTFISSFIFGLLFW, LFTVLGAIYGLVLFVGINNCT, IPYIFIQSAEFVIVIYPMIGF, LYAMFCNLLCFNYLAMFLISI, VAAILQSLFFTTFNIFAGFLI, WWVWFYYITPTSWTLNLFFSS, and ITAIILIAFPIALATMYAFFV.

The protein belongs to the ABC transporter superfamily. ABCG family. PDR (TC 3.A.1.205) subfamily. Expressed in roots and stems.

Its subcellular location is the membrane. May be a general defense protein. The polypeptide is ABC transporter G family member 33 (ABCG33) (Arabidopsis thaliana (Mouse-ear cress)).